A 22-amino-acid chain; its full sequence is Melittin-related peptide FQ-22-1 (22 aa).

A Glutamine amide modification is found at glutamine 22.

Expressed by the skin glands.

The protein localises to the secreted. This chain is Melittin-related peptide FQ-22-1, found in Rana arvalis (Moor frog).